The sequence spans 73 residues: Putative membrane protein insertion efficiency factor (73 aa).

This sequence belongs to the UPF0161 family.

It localises to the cell inner membrane. In terms of biological role, could be involved in insertion of integral membrane proteins into the membrane. This is Putative membrane protein insertion efficiency factor from Neisseria gonorrhoeae (strain ATCC 700825 / FA 1090).